Consider the following 353-residue polypeptide: Uroporphyrinogen decarboxylase (353 aa).

Substrate-binding positions include 27 to 31 (RQAGR), phenylalanine 46, aspartate 76, tyrosine 152, serine 207, and histidine 321.

It belongs to the uroporphyrinogen decarboxylase family. Homodimer.

Its subcellular location is the cytoplasm. The catalysed reaction is uroporphyrinogen III + 4 H(+) = coproporphyrinogen III + 4 CO2. It functions in the pathway porphyrin-containing compound metabolism; protoporphyrin-IX biosynthesis; coproporphyrinogen-III from 5-aminolevulinate: step 4/4. Functionally, catalyzes the decarboxylation of four acetate groups of uroporphyrinogen-III to yield coproporphyrinogen-III. The polypeptide is Uroporphyrinogen decarboxylase (Listeria monocytogenes serotype 4b (strain F2365)).